We begin with the raw amino-acid sequence, 303 residues long: N-acetyl-D-glucosamine kinase (303 aa).

ATP is bound by residues 4–11 and 133–140; these read GFDIGGTK and GVGGGLVL. Zn(2+) contacts are provided by His-157, Cys-177, Cys-179, and Cys-184.

The protein belongs to the ROK (NagC/XylR) family. NagK subfamily.

It catalyses the reaction N-acetyl-D-glucosamine + ATP = N-acetyl-D-glucosamine 6-phosphate + ADP + H(+). It functions in the pathway cell wall biogenesis; peptidoglycan recycling. Functionally, catalyzes the phosphorylation of N-acetyl-D-glucosamine (GlcNAc) derived from cell-wall degradation, yielding GlcNAc-6-P. The sequence is that of N-acetyl-D-glucosamine kinase from Salmonella paratyphi A (strain ATCC 9150 / SARB42).